The primary structure comprises 141 residues: Nucleoside diphosphate kinase (141 aa).

ATP is bound by residues Lys-11, Phe-59, Arg-87, Thr-93, Arg-104, and Asn-114. His-117 (pros-phosphohistidine intermediate) is an active-site residue.

Belongs to the NDK family. Homotetramer. Mg(2+) is required as a cofactor.

Its subcellular location is the cytoplasm. The catalysed reaction is a 2'-deoxyribonucleoside 5'-diphosphate + ATP = a 2'-deoxyribonucleoside 5'-triphosphate + ADP. It catalyses the reaction a ribonucleoside 5'-diphosphate + ATP = a ribonucleoside 5'-triphosphate + ADP. Major role in the synthesis of nucleoside triphosphates other than ATP. The ATP gamma phosphate is transferred to the NDP beta phosphate via a ping-pong mechanism, using a phosphorylated active-site intermediate. This is Nucleoside diphosphate kinase from Paraburkholderia phytofirmans (strain DSM 17436 / LMG 22146 / PsJN) (Burkholderia phytofirmans).